Reading from the N-terminus, the 859-residue chain is Catenin delta-1 (859 aa).

The stretch at 15 to 44 (SVRAQEAQFELLSRALEEERRHVTAQLDRV) forms a coiled coil. Residues 226 to 254 (IDGPDYATTGRRGANGGDPRRRLRSYEDP) are disordered. A compositionally biased stretch (basic and acidic residues) spans 243-254 (DPRRRLRSYEDP). 10 ARM repeats span residues 279–317 (APNSGPWRHPELPEVLAMLSYTLDAVRLNAAAYLQHLSY), 320–359 (EDVKREVCRLRGIPPLISLLEDPRAPIRLAACGALKNLSY), 363–401 (RENKMAVKNCDGVPALARLLRRRGEGIEGRELAECVTGT), 402–446 (LWNL…RVEG), 464–503 (LRNISSERSEARRKMRECEGLVDSVVHILRSEVSHGLVDS), 513–552 (LRNISYHVHREIPHAEKYMESPQNASAETQNPSCFGVRRG), 574–614 (AQGY…NLCA), 621–660 (RCIRAAVRQEKGLSSLADHLTHESERVVRAICGALRNLCG), 661–700 (DNRNRELIGKHALNSLVARLSSSSAQSSALSEDTNVCVIN), and 701–746 (TIHE…GFCL).

It belongs to the beta-catenin family. In terms of assembly, interacts with C-cadherin and with zbtb33. As to expression, ubiquitously expressed.

It localises to the cell junction. The protein resides in the adherens junction. Its subcellular location is the cytoplasm. The protein localises to the nucleus. It is found in the cell membrane. Its function is as follows. Key regulator of cell-cell adhesion that associates with and regulates the cell adhesion properties of both C-, E- and N-cadherins, being critical for their surface stability. Beside cell-cell adhesion, regulates gene transcription through several transcription factors including ZBTB33/Kaiso2 and GLIS2, and the activity of Rho family GTPases and downstream cytoskeletal dynamics. Implicated both in cell transformation by SRC and in ligand-induced receptor signaling through the EGF, PDGF, CSF-1 and ERBB2 receptors. Required for gastrulation, axial elongation and development of the craniofacial skeleton and eye. This is Catenin delta-1 (ctnnd1) from Xenopus laevis (African clawed frog).